A 409-amino-acid polypeptide reads, in one-letter code: Elongation factor Tu (409 aa).

The tr-type G domain occupies 10 to 214 (KPHVNVGTIG…AVDNYIPTPE (205 aa)). The G1 stretch occupies residues 19–26 (GHVDHGKT). GTP is bound at residue 19–26 (GHVDHGKT). Thr-26 contributes to the Mg(2+) binding site. Positions 60–64 (GITIN) are G2. A G3 region spans residues 81–84 (DCPG). GTP contacts are provided by residues 81-85 (DCPGH) and 136-139 (NKVD). A G4 region spans residues 136–139 (NKVD). The G5 stretch occupies residues 174–176 (SGL).

This sequence belongs to the TRAFAC class translation factor GTPase superfamily. Classic translation factor GTPase family. EF-Tu/EF-1A subfamily. Monomer.

The protein localises to the cytoplasm. The enzyme catalyses GTP + H2O = GDP + phosphate + H(+). In terms of biological role, GTP hydrolase that promotes the GTP-dependent binding of aminoacyl-tRNA to the A-site of ribosomes during protein biosynthesis. The protein is Elongation factor Tu of Thermosynechococcus vestitus (strain NIES-2133 / IAM M-273 / BP-1).